The primary structure comprises 663 residues: Bifunctional polymyxin resistance protein ArnA (663 aa).

Positions 1-307 (MSPKAVVFAY…EFGLVEGSQL (307 aa)) are formyltransferase ArnAFT. The Proton donor; for formyltransferase activity role is filled by His-106. (6R)-10-formyltetrahydrofolate contacts are provided by residues Arg-116 and 138–142 (VKRAD). Positions 317 to 663 (RRTRVLILGV…EAMAEKADMR (347 aa)) are dehydrogenase ArnADH. NAD(+) contacts are provided by residues Asp-350 and 371–372 (DI). UDP-alpha-D-glucuronate-binding positions include Ala-396, Tyr-401, and 435-436 (TS). Glu-437 acts as the Proton acceptor; for decarboxylase activity in catalysis. Residues Arg-463, Asn-494, 528-537 (RLVDGGAQKR), and Tyr-615 contribute to the UDP-alpha-D-glucuronate site. The active-site Proton donor; for decarboxylase activity is Arg-621.

It in the N-terminal section; belongs to the Fmt family. UDP-L-Ara4N formyltransferase subfamily. This sequence in the C-terminal section; belongs to the NAD(P)-dependent epimerase/dehydratase family. UDP-glucuronic acid decarboxylase subfamily. As to quaternary structure, homohexamer, formed by a dimer of trimers.

It carries out the reaction UDP-alpha-D-glucuronate + NAD(+) = UDP-beta-L-threo-pentopyranos-4-ulose + CO2 + NADH. The catalysed reaction is UDP-4-amino-4-deoxy-beta-L-arabinose + (6R)-10-formyltetrahydrofolate = UDP-4-deoxy-4-formamido-beta-L-arabinose + (6S)-5,6,7,8-tetrahydrofolate + H(+). It functions in the pathway nucleotide-sugar biosynthesis; UDP-4-deoxy-4-formamido-beta-L-arabinose biosynthesis; UDP-4-deoxy-4-formamido-beta-L-arabinose from UDP-alpha-D-glucuronate: step 1/3. It participates in nucleotide-sugar biosynthesis; UDP-4-deoxy-4-formamido-beta-L-arabinose biosynthesis; UDP-4-deoxy-4-formamido-beta-L-arabinose from UDP-alpha-D-glucuronate: step 3/3. The protein operates within bacterial outer membrane biogenesis; lipopolysaccharide biosynthesis. Functionally, bifunctional enzyme that catalyzes the oxidative decarboxylation of UDP-glucuronic acid (UDP-GlcUA) to UDP-4-keto-arabinose (UDP-Ara4O) and the addition of a formyl group to UDP-4-amino-4-deoxy-L-arabinose (UDP-L-Ara4N) to form UDP-L-4-formamido-arabinose (UDP-L-Ara4FN). The modified arabinose is attached to lipid A and is required for resistance to polymyxin and cationic antimicrobial peptides. The polypeptide is Bifunctional polymyxin resistance protein ArnA (Pseudomonas savastanoi pv. phaseolicola (strain 1448A / Race 6) (Pseudomonas syringae pv. phaseolicola (strain 1448A / Race 6))).